The primary structure comprises 120 residues: UPF0342 protein Csac_0863 (120 aa).

It belongs to the UPF0342 family.

The polypeptide is UPF0342 protein Csac_0863 (Caldicellulosiruptor saccharolyticus (strain ATCC 43494 / DSM 8903 / Tp8T 6331)).